Consider the following 260-residue polypeptide: 5-oxoprolinase subunit A (260 aa).

Belongs to the LamB/PxpA family. In terms of assembly, forms a complex composed of PxpA, PxpB and PxpC.

It catalyses the reaction 5-oxo-L-proline + ATP + 2 H2O = L-glutamate + ADP + phosphate + H(+). Its function is as follows. Catalyzes the cleavage of 5-oxoproline to form L-glutamate coupled to the hydrolysis of ATP to ADP and inorganic phosphate. The protein is 5-oxoprolinase subunit A of Methylococcus capsulatus (strain ATCC 33009 / NCIMB 11132 / Bath).